Consider the following 144-residue polypeptide: Putative pre-16S rRNA nuclease (144 aa).

This sequence belongs to the YqgF nuclease family.

It is found in the cytoplasm. Its function is as follows. Could be a nuclease involved in processing of the 5'-end of pre-16S rRNA. This is Putative pre-16S rRNA nuclease from Ralstonia nicotianae (strain ATCC BAA-1114 / GMI1000) (Ralstonia solanacearum).